The sequence spans 511 residues: Phosphoenolpyruvate carboxylase (511 aa).

The protein belongs to the PEPCase type 2 family. As to quaternary structure, homotetramer. Mg(2+) serves as cofactor.

The catalysed reaction is oxaloacetate + phosphate = phosphoenolpyruvate + hydrogencarbonate. Functionally, catalyzes the irreversible beta-carboxylation of phosphoenolpyruvate (PEP) to form oxaloacetate (OAA), a four-carbon dicarboxylic acid source for the tricarboxylic acid cycle. This chain is Phosphoenolpyruvate carboxylase, found in Saccharolobus islandicus (strain Y.G.57.14 / Yellowstone #1) (Sulfolobus islandicus).